The primary structure comprises 797 residues: Adhesion G-protein coupled receptor G7 (797 aa).

An N-terminal signal peptide occupies residues 1–26; the sequence is MASCRAWNLRVLVAVVCGLLTGIILG. The Extracellular segment spans residues 27 to 438; that stretch reads LGIWRIVIRI…QYPKSLDILS (412 aa). 9 N-linked (GlcNAc...) asparagine glycosylation sites follow: asparagine 82, asparagine 159, asparagine 178, asparagine 191, asparagine 247, asparagine 261, asparagine 312, asparagine 316, and asparagine 387. A GAIN-B domain is found at 275 to 428; that stretch reads FSVQKGASSS…AVLMTFKKDY (154 aa). Intrachain disulfides connect cysteine 383-cysteine 410 and cysteine 398-cysteine 412. Residues 383 to 428 form a GPS region; it reads CVYWNLSAKDWDTYGCQKDKGTDGFLRCRCNHTTNFAVLMTFKKDY. Residue asparagine 413 is glycosylated (N-linked (GlcNAc...) asparagine). Residues 439-459 traverse the membrane as a helical segment; that stretch reads NVGCALSVTGLALTVIFQIVT. Residues 460–468 lie on the Cytoplasmic side of the membrane; the sequence is RKVRKTSVT. The chain crosses the membrane as a helical span at residues 469 to 489; the sequence is WVLVNLCISMLIFNLLFVFGI. At 490–528 the chain is on the extracellular side; it reads ENSNKNLQTSDGDINNIDFDNNDIPRTDTINIPNPMCTA. The chain crosses the membrane as a helical span at residues 529-549; sequence IAALLHYFLLVTFTWNALSAA. Residues 550–565 are Cytoplasmic-facing; it reads QLYYLLIRTMKPLPRH. Residues 566-586 form a helical membrane-spanning segment; it reads FILFISLIGWGVPAIVVAITV. Over 587–623 the chain is Extracellular; it reads GVIYSQNGNNPQWELDYRQEKICWLAIPEPNGVIKSP. The helical transmembrane segment at 624-644 threads the bilayer; sequence LLWSFIVPVTIILISNVVMFI. The Cytoplasmic segment spans residues 645–669; that stretch reads TISIKVLWKNNQNLTSTKKVSSMKK. The chain crosses the membrane as a helical span at residues 670–690; the sequence is IVSTLSVAVVFGITWILAYLM. Over 691-698 the chain is Extracellular; sequence LVNDDSIR. A helical membrane pass occupies residues 699–719; it reads IVFSYIFCLFNTTQGLQIFIL. Residues 720–797 lie on the Cytoplasmic side of the membrane; it reads YTVRTKVFQS…SESDNAKESI (78 aa).

Belongs to the G-protein coupled receptor 2 family. Adhesion G-protein coupled receptor (ADGR) subfamily.

It localises to the membrane. In terms of biological role, orphan receptor. In Homo sapiens (Human), this protein is Adhesion G-protein coupled receptor G7 (ADGRG7).